The sequence spans 380 residues: Cytochrome b (380 aa).

4 consecutive transmembrane segments (helical) span residues 34–54 (FGSL…LLAM), 78–99 (WLIR…FLHI), 114–134 (WNTG…GYVL), and 179–199 (FFAL…THLM). His84 and His98 together coordinate heme b. 2 residues coordinate heme b: His183 and His197. His202 lines the a ubiquinone pocket. 4 consecutive transmembrane segments (helical) span residues 227 to 247 (LKDI…ALFS), 289 to 309 (LGGV…PFLH), 321 to 341 (LSQT…WVGS), and 348 to 368 (FIII…ILFP).

This sequence belongs to the cytochrome b family. The cytochrome bc1 complex contains 11 subunits: 3 respiratory subunits (MT-CYB, CYC1 and UQCRFS1), 2 core proteins (UQCRC1 and UQCRC2) and 6 low-molecular weight proteins (UQCRH/QCR6, UQCRB/QCR7, UQCRQ/QCR8, UQCR10/QCR9, UQCR11/QCR10 and a cleavage product of UQCRFS1). This cytochrome bc1 complex then forms a dimer. Heme b serves as cofactor.

It localises to the mitochondrion inner membrane. Functionally, component of the ubiquinol-cytochrome c reductase complex (complex III or cytochrome b-c1 complex) that is part of the mitochondrial respiratory chain. The b-c1 complex mediates electron transfer from ubiquinol to cytochrome c. Contributes to the generation of a proton gradient across the mitochondrial membrane that is then used for ATP synthesis. This chain is Cytochrome b (MT-CYB), found in Tragopan satyra (Satyr tragopan).